The chain runs to 418 residues: Bifunctional protein GlmU (418 aa).

Residues 1–236 (MAAVIVLAAG…VWQTEGVNDR (236 aa)) are pyrophosphorylase. UDP-N-acetyl-alpha-D-glucosamine contacts are provided by residues 7 to 10 (LAAG), lysine 21, glutamine 74, 79 to 80 (GT), 102 to 104 (YGD), glycine 141, glutamate 155, asparagine 170, and asparagine 234. Position 104 (aspartate 104) interacts with Mg(2+). Position 234 (asparagine 234) interacts with Mg(2+). Positions 237–257 (VQLARMNAEVNRRIVTGWMRA) are linker. Residues 258 to 418 (GVTIIDPTST…DDTLNPEADQ (161 aa)) form an N-acetyltransferase region. Arginine 339 and lysine 357 together coordinate UDP-N-acetyl-alpha-D-glucosamine. The active-site Proton acceptor is histidine 369. Residue tyrosine 372 participates in UDP-N-acetyl-alpha-D-glucosamine binding. Alanine 386 is an acetyl-CoA binding site.

In the N-terminal section; belongs to the N-acetylglucosamine-1-phosphate uridyltransferase family. The protein in the C-terminal section; belongs to the transferase hexapeptide repeat family. Homotrimer. Mg(2+) serves as cofactor.

The protein localises to the cytoplasm. The catalysed reaction is alpha-D-glucosamine 1-phosphate + acetyl-CoA = N-acetyl-alpha-D-glucosamine 1-phosphate + CoA + H(+). It carries out the reaction N-acetyl-alpha-D-glucosamine 1-phosphate + UTP + H(+) = UDP-N-acetyl-alpha-D-glucosamine + diphosphate. It participates in nucleotide-sugar biosynthesis; UDP-N-acetyl-alpha-D-glucosamine biosynthesis; N-acetyl-alpha-D-glucosamine 1-phosphate from alpha-D-glucosamine 6-phosphate (route II): step 2/2. It functions in the pathway nucleotide-sugar biosynthesis; UDP-N-acetyl-alpha-D-glucosamine biosynthesis; UDP-N-acetyl-alpha-D-glucosamine from N-acetyl-alpha-D-glucosamine 1-phosphate: step 1/1. The protein operates within bacterial outer membrane biogenesis; LPS lipid A biosynthesis. Catalyzes the last two sequential reactions in the de novo biosynthetic pathway for UDP-N-acetylglucosamine (UDP-GlcNAc). The C-terminal domain catalyzes the transfer of acetyl group from acetyl coenzyme A to glucosamine-1-phosphate (GlcN-1-P) to produce N-acetylglucosamine-1-phosphate (GlcNAc-1-P), which is converted into UDP-GlcNAc by the transfer of uridine 5-monophosphate (from uridine 5-triphosphate), a reaction catalyzed by the N-terminal domain. The protein is Bifunctional protein GlmU of Cutibacterium acnes (strain DSM 16379 / KPA171202) (Propionibacterium acnes).